The following is a 755-amino-acid chain: Polyribonucleotide nucleotidyltransferase (755 aa).

2 residues coordinate Mg(2+): aspartate 493 and aspartate 499. In terms of domain architecture, KH spans 560–619; the sequence is PRIMTIQIPVDKIGALIGPGGKTIRNICETTGAQIDIEDDGRVFITTPDGAAARQAISMI. Residues 629-698 enclose the S1 motif domain; sequence GDIFLGKVVS…TTGKISLSRR (70 aa). Positions 699 to 755 are disordered; sequence AVLTGETPEERKAAGAAPRPRPREEQRGGRDEPRSLRDELRGPRREGDRPRPRRRDD. Residues 719–755 show a composition bias toward basic and acidic residues; sequence RPREEQRGGRDEPRSLRDELRGPRREGDRPRPRRRDD.

It belongs to the polyribonucleotide nucleotidyltransferase family. Mg(2+) is required as a cofactor.

It is found in the cytoplasm. The catalysed reaction is RNA(n+1) + phosphate = RNA(n) + a ribonucleoside 5'-diphosphate. Involved in mRNA degradation. Catalyzes the phosphorolysis of single-stranded polyribonucleotides processively in the 3'- to 5'-direction. The chain is Polyribonucleotide nucleotidyltransferase from Chloroflexus aurantiacus (strain ATCC 29366 / DSM 635 / J-10-fl).